We begin with the raw amino-acid sequence, 193 residues long: Ion-translocating oxidoreductase complex subunit A (193 aa).

The next 6 membrane-spanning stretches (helical) occupy residues 5 to 25 (LLLF…FLGL), 39 to 59 (MGMG…AWLI), 63 to 83 (ILIP…VIAV), 102 to 122 (LLGI…VALL), 134 to 154 (ALYG…FAAI), and 171 to 191 (AIAL…NGLV).

The protein belongs to the NqrDE/RnfAE family. The complex is composed of six subunits: RsxA, RsxB, RsxC, RsxD, RsxE and RsxG.

Its subcellular location is the cell inner membrane. Functionally, part of a membrane-bound complex that couples electron transfer with translocation of ions across the membrane. Required to maintain the reduced state of SoxR. The chain is Ion-translocating oxidoreductase complex subunit A from Shigella sonnei (strain Ss046).